The chain runs to 243 residues: UPF0758 protein alr2351 (243 aa).

Residues 113 to 235 (PIDSPVAAVA…HQSLREITTL (123 aa)) enclose the MPN domain. Zn(2+) contacts are provided by His184, His186, and Asp197. The JAMM motif motif lies at 184-197 (HNHPSGNVEPSPED).

It belongs to the UPF0758 family.

The polypeptide is UPF0758 protein alr2351 (Nostoc sp. (strain PCC 7120 / SAG 25.82 / UTEX 2576)).